Here is a 444-residue protein sequence, read N- to C-terminus: Type VII secretion system protein EssB (444 aa).

The Cytoplasmic segment spans residues 1–229; it reads MVKNHNPKNE…RKVGHTVFKW (229 aa). The helical transmembrane segment at 230 to 250 threads the bilayer; sequence VAIGMTTLSVLLIAFLAFLYF. Residues 251 to 444 are Extracellular-facing; that stretch reads SVMKHNERIE…EKRQEAERKK (194 aa). The tract at residues 366–444 is disordered; it reads KNNGDLSNDK…EKRQEAERKK (79 aa). The span at 372–444 shows a compositional bias: basic and acidic residues; it reads SNDKRSEETK…EKRQEAERKK (73 aa). A coiled-coil region spans residues 387–443; it reads LQDILDKEKQVKDEKAKSEEEKAKAKDEKLKQQEENEKKQKEQAQKDKEKRQEAERK.

Belongs to the EssB family. As to quaternary structure, may oligomerize and interact with other membrane components to form the Ess system. Interacts with EsaA.

The protein localises to the cell membrane. Functionally, component of the type VII secretion system (Ess). Required for the secretion of EsxA and proper accumulation of EssB and EssD. The chain is Type VII secretion system protein EssB from Staphylococcus aureus (strain USA300).